The following is a 322-amino-acid chain: CRISPR-associated endonuclease Cas1 (322 aa).

E149, H214, and E229 together coordinate Mn(2+).

The protein belongs to the CRISPR-associated endonuclease Cas1 family. As to quaternary structure, homodimer, forms a heterotetramer with a Cas2 homodimer. Mg(2+) serves as cofactor. Requires Mn(2+) as cofactor.

Its function is as follows. CRISPR (clustered regularly interspaced short palindromic repeat), is an adaptive immune system that provides protection against mobile genetic elements (viruses, transposable elements and conjugative plasmids). CRISPR clusters contain spacers, sequences complementary to antecedent mobile elements, and target invading nucleic acids. CRISPR clusters are transcribed and processed into CRISPR RNA (crRNA). Acts as a dsDNA endonuclease. Involved in the integration of spacer DNA into the CRISPR cassette. This Methanocaldococcus jannaschii (strain ATCC 43067 / DSM 2661 / JAL-1 / JCM 10045 / NBRC 100440) (Methanococcus jannaschii) protein is CRISPR-associated endonuclease Cas1.